A 212-amino-acid polypeptide reads, in one-letter code: Ribosomal RNA small subunit methyltransferase G (212 aa).

S-adenosyl-L-methionine contacts are provided by residues G80, L85, 131-132 (AE), and R146.

Belongs to the methyltransferase superfamily. RNA methyltransferase RsmG family.

Its subcellular location is the cytoplasm. The enzyme catalyses guanosine(527) in 16S rRNA + S-adenosyl-L-methionine = N(7)-methylguanosine(527) in 16S rRNA + S-adenosyl-L-homocysteine. Functionally, specifically methylates the N7 position of guanine in position 527 of 16S rRNA. The chain is Ribosomal RNA small subunit methyltransferase G from Xylella fastidiosa (strain 9a5c).